We begin with the raw amino-acid sequence, 496 residues long: MHAKSLTELRAALAAKECSAVELAQLYLKRIDAARDLNAFVHVDADLTLAQAKAADAELARGAGGALTGLPIAHKDVFVTRGWRSTAGSKMLANYESPFDATVVARLQAAGMVTLGKTNMDEFAMGSSNENSAFGAVKNPWDTNAVPGGSSGGSSAAVAARLAPAATGTDTGGSIRQPASFAGVTGIKPTYGRVSRYGMIAFASSLDQGGPMAQSASDCALLLNAMSGFDERDSTSLEREDEDFTRHLGQPWAAGNDAGKPLAGLRIGLPNEYFGDGLADDVRASIDAALKAYEALGATLVPVSLPKTELSIPVYYVIAPAEASSNLSRFDGVRFGHRAAQYGDLLDMYKKSRAEGFGPEVKRRILVGAYVLSHGYYDAYYLQAQKIRRIIAQDFQEAFKSCDVIMGPASPTVAWDLGAKGDDPVQMYLADIYTLSVSLAGLPGMSVPCGFGAGANAKRPVGLQIIGNYFNEARMLQVADAFQRATDWHKQVPAGV.

Active-site charge relay system residues include K75 and S150. S174 (acyl-ester intermediate) is an active-site residue.

It belongs to the amidase family. GatA subfamily. Heterotrimer of A, B and C subunits.

It catalyses the reaction L-glutamyl-tRNA(Gln) + L-glutamine + ATP + H2O = L-glutaminyl-tRNA(Gln) + L-glutamate + ADP + phosphate + H(+). Its function is as follows. Allows the formation of correctly charged Gln-tRNA(Gln) through the transamidation of misacylated Glu-tRNA(Gln) in organisms which lack glutaminyl-tRNA synthetase. The reaction takes place in the presence of glutamine and ATP through an activated gamma-phospho-Glu-tRNA(Gln). The sequence is that of Glutamyl-tRNA(Gln) amidotransferase subunit A from Burkholderia ambifaria (strain MC40-6).